A 202-amino-acid chain; its full sequence is FMN-dependent NADH:quinone oxidoreductase 2 (202 aa).

FMN-binding positions include S9, 15–17, 95–98, and 139–142; these read SAS, MYNF, and TAGG.

It belongs to the azoreductase type 1 family. As to quaternary structure, homodimer. FMN is required as a cofactor.

The enzyme catalyses 2 a quinone + NADH + H(+) = 2 a 1,4-benzosemiquinone + NAD(+). It catalyses the reaction N,N-dimethyl-1,4-phenylenediamine + anthranilate + 2 NAD(+) = 2-(4-dimethylaminophenyl)diazenylbenzoate + 2 NADH + 2 H(+). Its function is as follows. Quinone reductase that provides resistance to thiol-specific stress caused by electrophilic quinones. Reduces both benzoquinones and naphthoquinones efficiently. In terms of biological role, also exhibits azoreductase activity. Catalyzes the reductive cleavage of the azo bond in aromatic azo compounds to the corresponding amines. Preferred substrates are the large bis-azo dye Ponceau BS, amaranth and tropaeolin O. The sequence is that of FMN-dependent NADH:quinone oxidoreductase 2 from Pseudomonas aeruginosa (strain ATCC 15692 / DSM 22644 / CIP 104116 / JCM 14847 / LMG 12228 / 1C / PRS 101 / PAO1).